Here is a 375-residue protein sequence, read N- to C-terminus: MTCSITELAKKLISIPSVSPKDLGCQDIIIKRLCAIGFDIKRVNVNDTKNFWAFRGTGKTLTFAGHTDVVPIGQDKDWQTDPFQPVIRSGYLFGRGSADMKGALAAMITAAERFVNKFPNHKGRLSFLITSDEESSAVDGTIKVVEYLMSKRDMIDYCIVGEPSSTNIVGDVIKNGRRGSITANITIHGIQGHIAYPDLADNPIHKGLPVILKILSIKLDSGNDFFLPSSINIANIHAGNGFNNVIPGSLFVQFNIRFSSEVSEKHIQSQIVNILNSNDINYSIEWLFSGKPFITKKGLLIDTVIQSIFYFNKKKPILSTSGGTSDGRFIALMGSEVVELGLVNNTIHKVNECVKISDLKLLSCMYEDIMKNLLS.

His66 serves as a coordination point for Zn(2+). Asp68 is an active-site residue. Asp99 lines the Zn(2+) pocket. The Proton acceptor role is filled by Glu133. Glu134, Glu162, and His348 together coordinate Zn(2+).

This sequence belongs to the peptidase M20A family. DapE subfamily. As to quaternary structure, homodimer. Zn(2+) is required as a cofactor. It depends on Co(2+) as a cofactor.

The catalysed reaction is N-succinyl-(2S,6S)-2,6-diaminopimelate + H2O = (2S,6S)-2,6-diaminopimelate + succinate. It functions in the pathway amino-acid biosynthesis; L-lysine biosynthesis via DAP pathway; LL-2,6-diaminopimelate from (S)-tetrahydrodipicolinate (succinylase route): step 3/3. Catalyzes the hydrolysis of N-succinyl-L,L-diaminopimelic acid (SDAP), forming succinate and LL-2,6-diaminopimelate (DAP), an intermediate involved in the bacterial biosynthesis of lysine and meso-diaminopimelic acid, an essential component of bacterial cell walls. This Buchnera aphidicola subsp. Acyrthosiphon pisum (strain 5A) protein is Succinyl-diaminopimelate desuccinylase.